The primary structure comprises 447 residues: ATP-dependent protease ATPase subunit HslU (447 aa).

ATP-binding positions include isoleucine 18, glycine 60–glutamate 65, aspartate 259, glutamate 325, and arginine 397.

Belongs to the ClpX chaperone family. HslU subfamily. A double ring-shaped homohexamer of HslV is capped on each side by a ring-shaped HslU homohexamer. The assembly of the HslU/HslV complex is dependent on binding of ATP.

It localises to the cytoplasm. In terms of biological role, ATPase subunit of a proteasome-like degradation complex; this subunit has chaperone activity. The binding of ATP and its subsequent hydrolysis by HslU are essential for unfolding of protein substrates subsequently hydrolyzed by HslV. HslU recognizes the N-terminal part of its protein substrates and unfolds these before they are guided to HslV for hydrolysis. This Burkholderia cenocepacia (strain ATCC BAA-245 / DSM 16553 / LMG 16656 / NCTC 13227 / J2315 / CF5610) (Burkholderia cepacia (strain J2315)) protein is ATP-dependent protease ATPase subunit HslU.